The sequence spans 100 residues: MTKSELIERIVTHQGLLSSKDVELAIKTMLEQMSQCLATGDRIEIRGFGSFSLHYRAPRVGRNPKTGQSVSLEGKFVPHFKPGKELRDRVNEDEHEEAHT.

Residues 81–100 (KPGKELRDRVNEDEHEEAHT) are disordered. Positions 82-100 (PGKELRDRVNEDEHEEAHT) are enriched in basic and acidic residues.

Belongs to the bacterial histone-like protein family. In terms of assembly, heterodimer of an alpha and a beta chain.

In terms of biological role, this protein is one of the two subunits of integration host factor, a specific DNA-binding protein that functions in genetic recombination as well as in transcriptional and translational control. The polypeptide is Integration host factor subunit beta (ihfB) (Pseudomonas putida (Arthrobacter siderocapsulatus)).